A 356-amino-acid polypeptide reads, in one-letter code: UDP-N-acetylglucosamine--N-acetylmuramyl-(pentapeptide) pyrophosphoryl-undecaprenol N-acetylglucosamine transferase (356 aa).

UDP-N-acetyl-alpha-D-glucosamine-binding positions include 12–14 (TGG), Asn124, Arg163, Ser188, Ile242, 261–266 (ALTVSE), and Gln287.

The protein belongs to the glycosyltransferase 28 family. MurG subfamily.

The protein resides in the cell inner membrane. The enzyme catalyses di-trans,octa-cis-undecaprenyl diphospho-N-acetyl-alpha-D-muramoyl-L-alanyl-D-glutamyl-meso-2,6-diaminopimeloyl-D-alanyl-D-alanine + UDP-N-acetyl-alpha-D-glucosamine = di-trans,octa-cis-undecaprenyl diphospho-[N-acetyl-alpha-D-glucosaminyl-(1-&gt;4)]-N-acetyl-alpha-D-muramoyl-L-alanyl-D-glutamyl-meso-2,6-diaminopimeloyl-D-alanyl-D-alanine + UDP + H(+). The protein operates within cell wall biogenesis; peptidoglycan biosynthesis. Functionally, cell wall formation. Catalyzes the transfer of a GlcNAc subunit on undecaprenyl-pyrophosphoryl-MurNAc-pentapeptide (lipid intermediate I) to form undecaprenyl-pyrophosphoryl-MurNAc-(pentapeptide)GlcNAc (lipid intermediate II). The chain is UDP-N-acetylglucosamine--N-acetylmuramyl-(pentapeptide) pyrophosphoryl-undecaprenol N-acetylglucosamine transferase from Pseudomonas fluorescens (strain ATCC BAA-477 / NRRL B-23932 / Pf-5).